The chain runs to 74 residues: Conotoxin Vi15a (74 aa).

Residues 1–19 form the signal peptide; it reads MMPVILLLLLSLAIRCADG. Residues 20–43 constitute a propeptide that is removed on maturation; the sequence is KAVQGDSDPSASLLTGDKNHDLPV. Tryptophan 72 is modified (tryptophan amide).

Post-translationally, contains four disulfide bonds. Expressed by the venom duct.

The protein localises to the secreted. This chain is Conotoxin Vi15a, found in Conus virgo (Virgin cone).